A 135-amino-acid chain; its full sequence is Retinol-binding protein 1 (135 aa).

Positions Arg22–Lys32 are important for interaction with STRA6. Residues Lys41, Met63, and Gln109 each coordinate all-trans-retinol.

It belongs to the calycin superfamily. Fatty-acid binding protein (FABP) family. As to quaternary structure, interacts (only as retinol-free apoprotein) with STRA6.

It localises to the cytoplasm. The protein resides in the lipid droplet. Cytoplasmic retinol-binding protein. Accepts retinol from the transport protein STRA6, and thereby contributes to retinol uptake, storage and retinoid homeostasis. The polypeptide is Retinol-binding protein 1 (RBP1) (Bos taurus (Bovine)).